The chain runs to 117 residues: Large ribosomal subunit protein uL18 (117 aa).

This sequence belongs to the universal ribosomal protein uL18 family. In terms of assembly, part of the 50S ribosomal subunit; part of the 5S rRNA/L5/L18/L25 subcomplex. Contacts the 5S and 23S rRNAs.

Functionally, this is one of the proteins that bind and probably mediate the attachment of the 5S RNA into the large ribosomal subunit, where it forms part of the central protuberance. This chain is Large ribosomal subunit protein uL18, found in Aliivibrio fischeri (strain MJ11) (Vibrio fischeri).